The primary structure comprises 181 residues: Adenine phosphoribosyltransferase (181 aa).

Belongs to the purine/pyrimidine phosphoribosyltransferase family. Homodimer.

The protein localises to the cytoplasm. It carries out the reaction AMP + diphosphate = 5-phospho-alpha-D-ribose 1-diphosphate + adenine. Its pathway is purine metabolism; AMP biosynthesis via salvage pathway; AMP from adenine: step 1/1. In terms of biological role, catalyzes a salvage reaction resulting in the formation of AMP, that is energically less costly than de novo synthesis. This Shewanella loihica (strain ATCC BAA-1088 / PV-4) protein is Adenine phosphoribosyltransferase.